Reading from the N-terminus, the 101-residue chain is MFVKKGDKVRVIAGKDKGTEAVVLTALPKVNKVIVEGVNIVKKHQRPTNELPQGGIIEKEAAIHVSNVQVLDKNGVAGRVGYKFVDGKKVRYNKKSGEVLD.

This sequence belongs to the universal ribosomal protein uL24 family. As to quaternary structure, part of the 50S ribosomal subunit.

One of two assembly initiator proteins, it binds directly to the 5'-end of the 23S rRNA, where it nucleates assembly of the 50S subunit. In terms of biological role, one of the proteins that surrounds the polypeptide exit tunnel on the outside of the subunit. The chain is Large ribosomal subunit protein uL24 from Streptococcus pneumoniae (strain ATCC 700669 / Spain 23F-1).